Consider the following 777-residue polypeptide: uncharacterized protein (777 aa).

Disordered regions lie at residues methionine 1–asparagine 101, serine 128–asparagine 150, histidine 219–asparagine 267, serine 334–aspartate 366, isoleucine 391–serine 466, lysine 529–glycine 577, leucine 590–isoleucine 622, and glutamate 713–proline 751. Low complexity-rich tracts occupy residues serine 128–asparagine 147 and asparagine 243–asparagine 265. Over residues serine 334–asparagine 343 the composition is skewed to polar residues. Over residues asparagine 344–aspartate 366 the composition is skewed to acidic residues. The span at isoleucine 391–lysine 407 shows a compositional bias: polar residues. Low complexity-rich tracts occupy residues asparagine 408–serine 466 and asparagine 532–asparagine 574. A compositionally biased stretch (basic and acidic residues) spans glutamate 597 to glutamate 606. Acidic residues-rich tracts occupy residues glutamate 607–serine 620 and aspartate 718–serine 730. Residues aspartate 731 to aspartate 740 show a composition bias toward low complexity.

This is an uncharacterized protein from Dictyostelium discoideum (Social amoeba).